The chain runs to 811 residues: Protein kinase C-binding protein NELL2a (811 aa).

The N-terminal stretch at 1-18 (MAFLQLFVGLLCGAAVSA) is a signal peptide. In terms of domain architecture, Laminin G-like spans 54 to 225 (AFMFQGSSRS…TQCPDLNRTC (172 aa)). N-linked (GlcNAc...) asparagine glycosylation is found at asparagine 222, asparagine 290, and asparagine 295. The VWFC 1 domain occupies 269-328 (RTCRVKDQIYREEQSWTDGCKNCTCSNGTVRCEKILCPPLDCPDGTTPAYVTGTCCKECQ). The region spanning 395 to 437 (GHDFCAEENICSENSDCVNLDAGASCGCKNGFRPLRLDSAYCE) is the EGF-like 1 domain. Cystine bridges form between cysteine 399/cysteine 411, cysteine 405/cysteine 420, and cysteine 422/cysteine 436. Ca(2+) is bound by residues aspartate 438, isoleucine 439, and glutamate 441. The 42-residue stretch at 438-479 (DIDECAEGRHYCRENTECVNTAGSFMCVCHTGFIRIDDYSCT) folds into the EGF-like 2; calcium-binding domain. Intrachain disulfides connect cysteine 442–cysteine 455, cysteine 449–cysteine 464, cysteine 466–cysteine 478, cysteine 484–cysteine 497, cysteine 491–cysteine 506, cysteine 508–cysteine 519, cysteine 523–cysteine 533, cysteine 527–cysteine 539, and cysteine 541–cysteine 550. Residues asparagine 457, threonine 458, and serine 461 each contribute to the Ca(2+) site. The region spanning 480–520 (EHDECASGQHDCDENALCFNTVGGHSCSCKPGYSGNGTVCR) is the EGF-like 3; calcium-binding domain. The N-linked (GlcNAc...) asparagine glycan is linked to asparagine 515. In terms of domain architecture, EGF-like 4 spans 521 to 551 (ALCDGRCLNGGSCASPNVCVCVQGFSGQNCE). Residues aspartate 553, isoleucine 554, and glutamate 556 each contribute to the Ca(2+) site. Residues 553–592 (DIDECSEGLVQCAAHATCVNLPGWYHCECRDGYHDNEVFS) form the EGF-like 5; calcium-binding domain. 3 disulfide bridges follow: cysteine 557/cysteine 570, cysteine 564/cysteine 579, and cysteine 581/cysteine 598. Residues asparagine 572, leucine 573, and tryptophan 576 each coordinate Ca(2+). Aspartate 600, isoleucine 601, and glutamate 603 together coordinate Ca(2+). An EGF-like 6; calcium-binding domain is found at 600–635 (DIDECRTGRSTCANDTVCFNLDGGFDCRCPHGHNCS). Cystine bridges form between cysteine 604/cysteine 617, cysteine 611/cysteine 626, and cysteine 628/cysteine 634. A glycan (N-linked (GlcNAc...) asparagine) is linked at asparagine 613. Residues asparagine 619, leucine 620, and glycine 623 each coordinate Ca(2+). Asparagine 633 is a glycosylation site (N-linked (GlcNAc...) asparagine). VWFC domains lie at 636-691 (GDCI…PECD) and 696-754 (SQCL…PRCV).

In terms of assembly, homotrimer.

The protein resides in the secreted. Functionally, may regulate neuronal differentiation, polarization and axon guidance. This chain is Protein kinase C-binding protein NELL2a (nell2a), found in Danio rerio (Zebrafish).